The sequence spans 188 residues: Elongation factor P (188 aa).

The protein belongs to the elongation factor P family.

It localises to the cytoplasm. It functions in the pathway protein biosynthesis; polypeptide chain elongation. Its function is as follows. Involved in peptide bond synthesis. Stimulates efficient translation and peptide-bond synthesis on native or reconstituted 70S ribosomes in vitro. Probably functions indirectly by altering the affinity of the ribosome for aminoacyl-tRNA, thus increasing their reactivity as acceptors for peptidyl transferase. The chain is Elongation factor P from Streptomyces avermitilis (strain ATCC 31267 / DSM 46492 / JCM 5070 / NBRC 14893 / NCIMB 12804 / NRRL 8165 / MA-4680).